We begin with the raw amino-acid sequence, 166 residues long: UBA-like domain-containing protein 2-A (166 aa).

Positions 120–166 are disordered; sequence QQPVWLPPASPTTHLHHHHHHPQPVWPPNSQPTGGPQKAMAAMDGQR.

The protein belongs to the UBALD family.

This Xenopus laevis (African clawed frog) protein is UBA-like domain-containing protein 2-A (ubald2-a).